Reading from the N-terminus, the 192-residue chain is Potassium-transporting ATPase KdpC subunit (192 aa).

A helical membrane pass occupies residues 7–27 (PLIVIFAVLTAVTGLAYPAVM).

Belongs to the KdpC family. As to quaternary structure, the system is composed of three essential subunits: KdpA, KdpB and KdpC.

It localises to the cell inner membrane. Functionally, part of the high-affinity ATP-driven potassium transport (or Kdp) system, which catalyzes the hydrolysis of ATP coupled with the electrogenic transport of potassium into the cytoplasm. This subunit acts as a catalytic chaperone that increases the ATP-binding affinity of the ATP-hydrolyzing subunit KdpB by the formation of a transient KdpB/KdpC/ATP ternary complex. The chain is Potassium-transporting ATPase KdpC subunit from Paraburkholderia phytofirmans (strain DSM 17436 / LMG 22146 / PsJN) (Burkholderia phytofirmans).